The primary structure comprises 434 residues: Cullin-like protein 5 (434 aa).

The interval 1 to 34 (MKRSISPDPFSSTKSPKLVHHSPDDGGAEGNPYR) is disordered.

This sequence belongs to the cullin family.

This chain is Cullin-like protein 5, found in Arabidopsis thaliana (Mouse-ear cress).